The following is an 81-amino-acid chain: ATP synthase subunit c (81 aa).

The next 2 membrane-spanning stretches (helical) occupy residues 7-27 (AASV…PGLG) and 57-77 (FAFM…LLFA).

It belongs to the ATPase C chain family. As to quaternary structure, F-type ATPases have 2 components, F(1) - the catalytic core - and F(0) - the membrane proton channel. F(1) has five subunits: alpha(3), beta(3), gamma(1), delta(1), epsilon(1). F(0) has four main subunits: a(1), b(1), b'(1) and c(10-14). The alpha and beta chains form an alternating ring which encloses part of the gamma chain. F(1) is attached to F(0) by a central stalk formed by the gamma and epsilon chains, while a peripheral stalk is formed by the delta, b and b' chains.

The protein localises to the cellular thylakoid membrane. Its function is as follows. F(1)F(0) ATP synthase produces ATP from ADP in the presence of a proton or sodium gradient. F-type ATPases consist of two structural domains, F(1) containing the extramembraneous catalytic core and F(0) containing the membrane proton channel, linked together by a central stalk and a peripheral stalk. During catalysis, ATP synthesis in the catalytic domain of F(1) is coupled via a rotary mechanism of the central stalk subunits to proton translocation. Functionally, key component of the F(0) channel; it plays a direct role in translocation across the membrane. A homomeric c-ring of between 10-14 subunits forms the central stalk rotor element with the F(1) delta and epsilon subunits. In Prochlorococcus marinus (strain MIT 9301), this protein is ATP synthase subunit c.